A 762-amino-acid polypeptide reads, in one-letter code: MTTIKTSNLGFPRIGLNREWKKTLEAYWKGNTDKETFLKELDGLFLSAVKTQLDQHIDIVPVSDFTHYDHVLDTAVSFNWIPKRFRSITDPVDTYFAIARGVKDAVSSEMTKWFNTNYHYIVPEYDESIEFRLTRNKQLDDYRRIKEEFGAETKPVIVGPYTFVTLAKGYEESEAKAIQKRLVPLYVQLLKELEAEGVKWVQIDEPALVTASSEDVRAAKELYESITKELSGLNVLLQTYFDSVDAYEELVSYPVQGIGLDFVHDKGRNLDQLKKHGFPKDKVLAAGVIDGRNIWKIDVEERLDAALDILSHADVEELWIQPSSSLLHVPVAKHPDEHLEKDLLNGLSYAKEKLAELGVLKEGLLSGKAAVSEQIEESKAALKALKAFATGANSAQKEELNQLTEKDFSRPASFEERLALQNESLGLPLLPTTTIGSFPQSAEVRSARQKWRKKDWTDEQYQAFINAETKRWVDIQEEIGLDVLVHGEFERTDMVEYFGEKLAGFAFTKYAWVQSYGSRCVRPPVIFGDVEFIEPMTVKDTVYAQSLTEKHMKGMLTGPVTILNWSFPRVDISRKEIAFQIGLALRKEVKALEDAGIQIIQVDEPALREGLPLKTQDWDEYLTWAAEAFRLTTSSVQNETQIHTHMCYSNFEDIVDTINDLDADVITIEHSRSHGGFLEYLKEHPYVKGLGLGVYDIHSPRVPATEEIYQIIDDALEVCPTDRFWVNPDCGLKTRQQEETVAALKNMVDAAKQARKKQAQLV.

5-methyltetrahydropteroyltri-L-glutamate is bound by residues 18–21 and Lys-112; that span reads REWK. Residues 435 to 437 and Glu-488 each bind L-homocysteine; that span reads IGS. L-methionine contacts are provided by residues 435 to 437 and Glu-488; that span reads IGS. Residues 519 to 520 and Trp-565 contribute to the 5-methyltetrahydropteroyltri-L-glutamate site; that span reads RC. Residue Asp-603 participates in L-homocysteine binding. Asp-603 is a binding site for L-methionine. A 5-methyltetrahydropteroyltri-L-glutamate-binding site is contributed by Glu-609. Zn(2+)-binding residues include His-645, Cys-647, and Glu-669. The active-site Proton donor is His-698. Residue Cys-730 coordinates Zn(2+).

This sequence belongs to the vitamin-B12 independent methionine synthase family. Zn(2+) is required as a cofactor.

It catalyses the reaction 5-methyltetrahydropteroyltri-L-glutamate + L-homocysteine = tetrahydropteroyltri-L-glutamate + L-methionine. The protein operates within amino-acid biosynthesis; L-methionine biosynthesis via de novo pathway; L-methionine from L-homocysteine (MetE route): step 1/1. Functionally, catalyzes the transfer of a methyl group from 5-methyltetrahydrofolate to homocysteine resulting in methionine formation. The polypeptide is 5-methyltetrahydropteroyltriglutamate--homocysteine methyltransferase (Bacillus velezensis (strain DSM 23117 / BGSC 10A6 / LMG 26770 / FZB42) (Bacillus amyloliquefaciens subsp. plantarum)).